The sequence spans 395 residues: Phosphopentomutase (395 aa).

Mn(2+)-binding residues include aspartate 12, aspartate 289, histidine 294, aspartate 330, histidine 331, and histidine 342.

It belongs to the phosphopentomutase family. The cofactor is Mn(2+).

It is found in the cytoplasm. It carries out the reaction 2-deoxy-alpha-D-ribose 1-phosphate = 2-deoxy-D-ribose 5-phosphate. The catalysed reaction is alpha-D-ribose 1-phosphate = D-ribose 5-phosphate. Its pathway is carbohydrate degradation; 2-deoxy-D-ribose 1-phosphate degradation; D-glyceraldehyde 3-phosphate and acetaldehyde from 2-deoxy-alpha-D-ribose 1-phosphate: step 1/2. Functionally, isomerase that catalyzes the conversion of deoxy-ribose 1-phosphate (dRib-1-P) and ribose 1-phosphate (Rib-1-P) to deoxy-ribose 5-phosphate (dRib-5-P) and ribose 5-phosphate (Rib-5-P), respectively. This is Phosphopentomutase from Levilactobacillus brevis (strain ATCC 367 / BCRC 12310 / CIP 105137 / JCM 1170 / LMG 11437 / NCIMB 947 / NCTC 947) (Lactobacillus brevis).